Reading from the N-terminus, the 456-residue chain is Bifunctional protein GlmU (456 aa).

The segment at 1-229 is pyrophosphorylase; sequence MSTSPLSVVI…LSEVEGVNNR (229 aa). Residues 11-14, Lys25, Gln76, 81-82, 103-105, Gly140, Glu154, Asn169, and Asn227 contribute to the UDP-N-acetyl-alpha-D-glucosamine site; these read LAAG, GT, and YGD. Asp105 serves as a coordination point for Mg(2+). Asn227 is a binding site for Mg(2+). A linker region spans residues 230–250; the sequence is LQLSALERAYQQQQAQRLLLA. Residues 251 to 456 form an N-acetyltransferase region; sequence GVMLTDPARF…SGWERPVKKK (206 aa). Arg333 and Lys351 together coordinate UDP-N-acetyl-alpha-D-glucosamine. His363 functions as the Proton acceptor in the catalytic mechanism. Tyr366 and Asn377 together coordinate UDP-N-acetyl-alpha-D-glucosamine. Residues Ala380, 386 to 387, Ser405, Ala423, and Arg440 contribute to the acetyl-CoA site; that span reads NY.

The protein in the N-terminal section; belongs to the N-acetylglucosamine-1-phosphate uridyltransferase family. In the C-terminal section; belongs to the transferase hexapeptide repeat family. As to quaternary structure, homotrimer. The cofactor is Mg(2+).

It is found in the cytoplasm. The enzyme catalyses alpha-D-glucosamine 1-phosphate + acetyl-CoA = N-acetyl-alpha-D-glucosamine 1-phosphate + CoA + H(+). The catalysed reaction is N-acetyl-alpha-D-glucosamine 1-phosphate + UTP + H(+) = UDP-N-acetyl-alpha-D-glucosamine + diphosphate. It functions in the pathway nucleotide-sugar biosynthesis; UDP-N-acetyl-alpha-D-glucosamine biosynthesis; N-acetyl-alpha-D-glucosamine 1-phosphate from alpha-D-glucosamine 6-phosphate (route II): step 2/2. Its pathway is nucleotide-sugar biosynthesis; UDP-N-acetyl-alpha-D-glucosamine biosynthesis; UDP-N-acetyl-alpha-D-glucosamine from N-acetyl-alpha-D-glucosamine 1-phosphate: step 1/1. It participates in bacterial outer membrane biogenesis; LPS lipid A biosynthesis. Catalyzes the last two sequential reactions in the de novo biosynthetic pathway for UDP-N-acetylglucosamine (UDP-GlcNAc). The C-terminal domain catalyzes the transfer of acetyl group from acetyl coenzyme A to glucosamine-1-phosphate (GlcN-1-P) to produce N-acetylglucosamine-1-phosphate (GlcNAc-1-P), which is converted into UDP-GlcNAc by the transfer of uridine 5-monophosphate (from uridine 5-triphosphate), a reaction catalyzed by the N-terminal domain. In Edwardsiella ictaluri (strain 93-146), this protein is Bifunctional protein GlmU.